A 263-amino-acid chain; its full sequence is Small ribosomal subunit protein uS2m (263 aa).

A mitochondrion-targeting transit peptide spans 1–15 (MLSRKLSPEQLVARR).

It belongs to the universal ribosomal protein uS2 family. Component of the mitochondrial small ribosomal subunit (mt-SSU). Mature yeast 74S mitochondrial ribosomes consist of a small (37S) and a large (54S) subunit. The 37S small subunit contains a 15S ribosomal RNA (15S mt-rRNA) and at least 32 different proteins. The 54S large subunit contains a 21S rRNA (21S mt-rRNA) and at least 45 different proteins.

It localises to the mitochondrion. Functionally, component of the mitochondrial ribosome (mitoribosome), a dedicated translation machinery responsible for the synthesis of mitochondrial genome-encoded proteins, including at least some of the essential transmembrane subunits of the mitochondrial respiratory chain. The mitoribosomes are attached to the mitochondrial inner membrane and translation products are cotranslationally integrated into the membrane. The protein is Small ribosomal subunit protein uS2m of Schizosaccharomyces pombe (strain 972 / ATCC 24843) (Fission yeast).